The chain runs to 343 residues: RNA-binding protein 43 (343 aa).

The 76-residue stretch at Arg15 to Glu90 folds into the RRM domain.

In Mus musculus (Mouse), this protein is RNA-binding protein 43 (Rbm43).